Reading from the N-terminus, the 202-residue chain is Holliday junction branch migration complex subunit RuvA (202 aa).

The interval 1–64 (MFAYIRGRLE…EDVISLYGFL (64 aa)) is domain I. The segment at 65 to 143 (TQEELNVFEL…KEQLTEYAQS (79 aa)) is domain II. Positions 144 to 152 (EEGGKVLDT) are flexible linker. The tract at residues 152–202 (TDSSKMAEAVSALMVLGYSPAEANKAVSAVYREDMDIETIIKNALKGLARP) is domain III.

Belongs to the RuvA family. In terms of assembly, homotetramer. Forms an RuvA(8)-RuvB(12)-Holliday junction (HJ) complex. HJ DNA is sandwiched between 2 RuvA tetramers; dsDNA enters through RuvA and exits via RuvB. An RuvB hexamer assembles on each DNA strand where it exits the tetramer. Each RuvB hexamer is contacted by two RuvA subunits (via domain III) on 2 adjacent RuvB subunits; this complex drives branch migration. In the full resolvosome a probable DNA-RuvA(4)-RuvB(12)-RuvC(2) complex forms which resolves the HJ.

It localises to the cytoplasm. Functionally, the RuvA-RuvB-RuvC complex processes Holliday junction (HJ) DNA during genetic recombination and DNA repair, while the RuvA-RuvB complex plays an important role in the rescue of blocked DNA replication forks via replication fork reversal (RFR). RuvA specifically binds to HJ cruciform DNA, conferring on it an open structure. The RuvB hexamer acts as an ATP-dependent pump, pulling dsDNA into and through the RuvAB complex. HJ branch migration allows RuvC to scan DNA until it finds its consensus sequence, where it cleaves and resolves the cruciform DNA. The sequence is that of Holliday junction branch migration complex subunit RuvA from Acetivibrio thermocellus (strain ATCC 27405 / DSM 1237 / JCM 9322 / NBRC 103400 / NCIMB 10682 / NRRL B-4536 / VPI 7372) (Clostridium thermocellum).